A 550-amino-acid chain; its full sequence is Chaperonin GroEL (550 aa).

ATP contacts are provided by residues 30-33 (TLGP), Lys-51, 87-91 (DGTTT), Gly-415, and Asp-495.

The protein belongs to the chaperonin (HSP60) family. Forms a cylinder of 14 subunits composed of two heptameric rings stacked back-to-back. Interacts with the co-chaperonin GroES.

The protein resides in the cytoplasm. It carries out the reaction ATP + H2O + a folded polypeptide = ADP + phosphate + an unfolded polypeptide.. In terms of biological role, together with its co-chaperonin GroES, plays an essential role in assisting protein folding. The GroEL-GroES system forms a nano-cage that allows encapsulation of the non-native substrate proteins and provides a physical environment optimized to promote and accelerate protein folding. This is Chaperonin GroEL from Shewanella woodyi (strain ATCC 51908 / MS32).